A 327-amino-acid chain; its full sequence is Asnovolin J 5',6'-dehydrogenase nvfM (327 aa).

The chain crosses the membrane as a helical span at residues 9–29 (VAIVGASGVTGGSIVNGLLAL). NADP(+)-binding positions include 13 to 19 (GASGVTG) and K47. K130 functions as the Proton acceptor in the catalytic mechanism.

The protein belongs to the NmrA-type oxidoreductase family.

Its subcellular location is the membrane. The enzyme catalyses asnovolin K + AH2 = asnovolin A + A. It carries out the reaction chermesin D methyl ester + AH2 = asnovolin J + A. It participates in secondary metabolite biosynthesis; terpenoid biosynthesis. Asnovolin J 5',6'-dehydrogenase; part of the gene cluster that mediates the biosynthesis of novofumigatonin, a heavily oxygenated meroterpenoid containing a unique orthoester moiety. The first step of the pathway is the synthesis of 3,5-dimethylorsellinic acid (DMOA) by the polyketide synthase nvfA via condensation of one acetyl-CoA starter unit with 3 malonyl-CoA units and 2 methylations. DMOA is then converted to farnesyl-DMOA by the farnesyltransferase nvfB. Epoxydation by FAD-dependent monooxygenase nvfK, followed by a protonation-initiated cyclization catalyzed by the terpene cyclase nvfL leads to the production of asnavolin H. The short chain dehydrogenase nvfC then as a 3-OH dehydrogenase of asnovolin H to yield chemesin D. There are two branches to synthesize asnovolin A from chemesin D. In one branch, chemesin D undergoes Baeyer-Villiger oxidation by nvfH, methylation by nvfJ, and enoyl reduction by the nvfM D enoylreductase that reduces the double bond between C-5'and C-6', to form respectively asnovolin I, asnovolin K, and asnovolin A. In the other branch, the methylation precedes the Baeyer-Villiger oxidation and the enoyl reduction to yield asnovolin A via the asnovolin J intermediate. Asnovolin A is further converted to fumigatonoid A by the Fe(II)/2-oxoglutarate-dependent dioxygenase nvfI that catalyzes an endoperoxidation reaction. The alpha/beta hydrolase nvfD then acts as an epimerase that converts fumigatonoid A to its C-5' epimer, which then undergoes spontaneous or nvfD-catalyzed lactonization. The following step utilizes the ketoreductase nvfG to produce fumigatonoid B. The dioxygenase nvfE further converts fumigatonoid B into fumigatonoid C. Finally the Fe(II)/2-oxoglutarate-dependent dioxygenase nvfF catalyzes two rounds of oxidation to transform fumigatonoid C into the end product, novofumigatonin A. This Aspergillus novofumigatus (strain IBT 16806) protein is Asnovolin J 5',6'-dehydrogenase nvfM.